The following is a 272-amino-acid chain: tRNA (guanine-N(7)-)-methyltransferase (272 aa).

A compositionally biased stretch (basic and acidic residues) spans 1–20 (MSTDSESKRRAYREEKEGAR). The interval 1-43 (MSTDSESKRRAYREEKEGARKKSVKLAPEATPESKPDLPRKRY) is disordered. S-adenosyl-L-methionine is bound by residues Gly-89, 112-113 (EI), 148-149 (NA), and Cys-168. Residue Asp-171 is part of the active site. 246–248 (TEE) contacts S-adenosyl-L-methionine.

It belongs to the class I-like SAM-binding methyltransferase superfamily. TrmB family. As to quaternary structure, forms a complex with TRM82.

The protein localises to the nucleus. The catalysed reaction is guanosine(46) in tRNA + S-adenosyl-L-methionine = N(7)-methylguanosine(46) in tRNA + S-adenosyl-L-homocysteine. Its pathway is tRNA modification; N(7)-methylguanine-tRNA biosynthesis. Its function is as follows. Catalyzes the formation of N(7)-methylguanine at position 46 (m7G46) in tRNA. The chain is tRNA (guanine-N(7)-)-methyltransferase from Meyerozyma guilliermondii (strain ATCC 6260 / CBS 566 / DSM 6381 / JCM 1539 / NBRC 10279 / NRRL Y-324) (Yeast).